Reading from the N-terminus, the 178-residue chain is Zinc finger protein ZAT11 (178 aa).

2 consecutive C2H2-type zinc fingers follow at residues 47–69 (FECKTCNKRFSSFQALGGHRASH) and 94–116 (HKCSICSQSFGTGQALGGHMRRH).

As to expression, expressed in leaves.

Its subcellular location is the nucleus. Functionally, probable transcription factor that may be involved in stress responses. This Arabidopsis thaliana (Mouse-ear cress) protein is Zinc finger protein ZAT11 (ZAT11).